The primary structure comprises 136 residues: Histone H3.2 (136 aa).

Residues 1-43 (MARTKQTARKSTGGKAPRKQLATKAARKSAPATGGVKKPHRFR) are disordered. 2 positions are modified to N6,N6,N6-trimethyllysine; alternate: Lys5 and Lys10. N6,N6-dimethyllysine; alternate is present on residues Lys5 and Lys10. Residues Lys5 and Lys10 each carry the N6-methyllysine; alternate modification. Lys10 carries the N6-acetyllysine; alternate modification. Residue Ser11 is modified to Phosphoserine. Phosphothreonine is present on Thr12. Residue Lys15 is modified to N6-acetyllysine. An N6-methyllysine; alternate mark is found at Lys19, Lys24, and Lys28. An N6-acetyllysine; alternate mark is found at Lys19 and Lys24. Residue Lys28 is modified to N6,N6,N6-trimethyllysine; alternate. Position 28 is an N6,N6-dimethyllysine; alternate (Lys28). Phosphoserine is present on Ser29. Lys37 is subject to N6,N6,N6-trimethyllysine; alternate. Lys37 bears the N6,N6-dimethyllysine; alternate mark. An N6-methyllysine; alternate modification is found at Lys37.

Belongs to the histone H3 family. The nucleosome is a histone octamer containing two molecules each of H2A, H2B, H3 and H4 assembled in one H3-H4 heterotetramer and two H2A-H2B heterodimers. The octamer wraps approximately 147 bp of DNA. Acetylation is generally linked to gene activation. Can be acetylated to form H3K9ac, H3K14ac, H3K18ac and H3K23ac. H3K9ac could compete with H3K9me and prevent gene silencing. H3K9ac is restricted to euchromatin. In terms of processing, methylated to form mainly H3K4me, H3K9me, H3K18me, H3K23me, H3K27me and H3K36me. H3K4me1/2/3, H3K9me3, H3K27me3 and H3K36me1/2/3 are typical marks for euchromatin, whereas heterochromatic chromocenters are enriched in H3K9me1/2 and H3K27me1/2. H2BK143ub1 is probably prerequisite for H3K4me. Post-translationally, can be phosphorylated to form H3S10ph, H3T11ph and H3S28ph.

The protein localises to the nucleus. It localises to the chromosome. In terms of biological role, core component of nucleosome. Nucleosomes wrap and compact DNA into chromatin, limiting DNA accessibility to the cellular machineries which require DNA as a template. Histones thereby play a central role in transcription regulation, DNA repair, DNA replication and chromosomal stability. DNA accessibility is regulated via a complex set of post-translational modifications of histones, also called histone code, and nucleosome remodeling. The chain is Histone H3.2 from Brassica napus (Rape).